We begin with the raw amino-acid sequence, 473 residues long: O-methyltransferase ARMGADRAFT_1088206 (473 aa).

S-adenosyl-L-methionine-binding positions include 276-277 (AG), Asp299, 330-331 (DM), and Arg348. His352 acts as the Proton acceptor in catalysis.

It belongs to the class I-like SAM-binding methyltransferase superfamily. Cation-independent O-methyltransferase family.

The protein operates within secondary metabolite biosynthesis. Functionally, O-methyltransferase, part of the gene cluster that mediates the biosynthesis of melleolides, a range of antifungal and phytotoxic polyketide derivatives composed of an orsellinic acid (OA) moiety esterified to various sesquiterpene alcohols. The first step in melleolides biosynthesis is performed by the delta(6)-protoilludene synthase PRO1 which catalyzes the cyclization of farnesyl diphosphate to protoilludene. The orsellinic acid synthase armB produces OA by condensing acetyl-CoA with 3 malonyl-CoA units in a three-round chain elongation reaction folowed by a C2-C7 ring closure. ArmB further catalyzes the trans-esterification of OA to the various sesquiterpene alcohols resulting from the hydroxylation of protoilludene. The melleolides cluster also includes 5 cytochrome P450 monooxygenases, 4 NAD(+)-dependent oxidoreductases, one flavin-dependent oxidoreductase, and one O-methyltransferase. The cytochrome P450 monooxygenases may be involved in protoilludene hydroxylation to elaborate melleolides with multiple alcohol groups, such as melleolide D, which carries alcohol functionalities at C-4, C-5, C-10, and C-13. The role of the NAD(+)-dependent enzymes remains unknown. Numerous melleolides, including arnamial, show 5'-O-methylation of the aromatic moiety which may be catalyzed by the methyltransferase encoded in the cluster. The flavin-dependent oxidoreductase might represent the dehydrogenase yielding the aldehyde in position 1 of arnamial and other melleolides. Finally, several halogenase localized outside of the cluster, are able to catalyze the transfer of a single chlorine atom to the melleolide backbone, resulting in a 6'-chloromelleolide product. In Armillaria gallica (Bulbous honey fungus), this protein is O-methyltransferase ARMGADRAFT_1088206.